Reading from the N-terminus, the 368-residue chain is tRNA-specific 2-thiouridylase MnmA (368 aa).

ATP is bound by residues Gly11–Ser18 and Met37. The interaction with target base in tRNA stretch occupies residues Asn97 to Asp99. The active-site Nucleophile is the Cys102. Cysteines 102 and 199 form a disulfide. Gly127 contributes to the ATP binding site. The tract at residues Lys149–Gln151 is interaction with tRNA. Residue Cys199 is the Cysteine persulfide intermediate of the active site. Positions Arg311 to Tyr312 are interaction with tRNA.

This sequence belongs to the MnmA/TRMU family. Interacts with TusE.

Its subcellular location is the cytoplasm. The catalysed reaction is S-sulfanyl-L-cysteinyl-[protein] + uridine(34) in tRNA + AH2 + ATP = 2-thiouridine(34) in tRNA + L-cysteinyl-[protein] + A + AMP + diphosphate + H(+). Its function is as follows. Catalyzes the 2-thiolation of uridine at the wobble position (U34) of tRNA(Lys), tRNA(Glu) and tRNA(Gln), leading to the formation of s(2)U34, the first step of tRNA-mnm(5)s(2)U34 synthesis. Sulfur is provided by IscS, via a sulfur-relay system. Binds ATP and its substrate tRNAs. This chain is tRNA-specific 2-thiouridylase MnmA, found in Escherichia coli O157:H7.